The following is a 234-amino-acid chain: MAGKKFAAVAKKVDSAKKYTVEEAFKLVVETAPAKFDESIDVALRLGIDPKQSDQQVRGAIALPHGLGKEVKVVVFAKGPKEAEAKAAGADFVGADDLVAKIQGGWLDFDKCIATPDMMATVSKVAKILGPRGLMPNPKIGTVTMNVGEAVTAEKKGKLDFRVDKAGIVHAGIGKKSMGDAKLKDNFMTLLGAIVKAKPASSKGIYLRSIAVASTMGPGVKIEPNAAAAATGAN.

The protein belongs to the universal ribosomal protein uL1 family. As to quaternary structure, part of the 50S ribosomal subunit.

Functionally, binds directly to 23S rRNA. The L1 stalk is quite mobile in the ribosome, and is involved in E site tRNA release. Its function is as follows. Protein L1 is also a translational repressor protein, it controls the translation of the L11 operon by binding to its mRNA. The polypeptide is Large ribosomal subunit protein uL1 (Bdellovibrio bacteriovorus (strain ATCC 15356 / DSM 50701 / NCIMB 9529 / HD100)).